A 341-amino-acid chain; its full sequence is Phenylalanine--tRNA ligase alpha subunit (341 aa).

A Mg(2+)-binding site is contributed by Glu-254.

The protein belongs to the class-II aminoacyl-tRNA synthetase family. Phe-tRNA synthetase alpha subunit type 1 subfamily. Tetramer of two alpha and two beta subunits. It depends on Mg(2+) as a cofactor.

It localises to the cytoplasm. The enzyme catalyses tRNA(Phe) + L-phenylalanine + ATP = L-phenylalanyl-tRNA(Phe) + AMP + diphosphate + H(+). The sequence is that of Phenylalanine--tRNA ligase alpha subunit from Chlorobaculum parvum (strain DSM 263 / NCIMB 8327) (Chlorobium vibrioforme subsp. thiosulfatophilum).